The chain runs to 461 residues: Protein eva-1 (461 aa).

The first 22 residues, 1-22 (MNMHIVSPVLLLFWFGIIVTDG), serve as a signal peptide directing secretion. An SUEL-type lectin domain is found at 55–160 (ACDGERITLS…KYLQMAYGCI (106 aa)). The helical transmembrane segment at 370–390 (VMCIVLAVSMAAIVVLSACII) threads the bilayer. The tract at residues 397-429 (NKDSSRSSRRSRSRRSLETSKLVSSNYGGSITP) is disordered. Positions 415-429 (TSKLVSSNYGGSITP) are enriched in polar residues.

The protein belongs to the EVA1 family. Interacts with sax-3. Interacts with slt-1. Interacts (via the SUEL-type lectin domain) with madd-4. Interacts (via the transmembrane domain) with unc-40.

The protein resides in the cell membrane. Functionally, acts as a receptor for slt-1. Required for the guidance of the AVM pioneer axon to the ventral nerve cord. Acts as a unc-40 coreceptor to enhance the sensitivity of unc-40 to the madd-4 midline guidance cue to guide muscle arm extensions (muscle arms) and AVM mechanosensory axons towards the dorsoventral midline. The protein is Protein eva-1 (eva-1) of Caenorhabditis elegans.